Reading from the N-terminus, the 121-residue chain is Splicing factor 3B subunit 6 (121 aa).

Positions Glu-12–Lys-25 are interaction with pre-mRNA branch site. Residues Arg-15–Ser-90 enclose the RRM domain.

This sequence belongs to the SF3B6 family. Component of splicing factor SF3B complex. Component of the U11/U12 snRNPs that are part of the U12-type spliceosome.

The protein localises to the nucleus. Involved in pre-mRNA splicing as a component of the splicing factor SF3B complex. SF3B complex is required for 'A' complex assembly formed by the stable binding of U2 snRNP to the branchpoint sequence (BPS) in pre-mRNA. Directly contacts the pre-mRNA branch site adenosine for the first catalytic step of splicing. Enters the spliceosome and associates with the pre-mRNA branch site as part of the 17S U2 or, in the case of the minor spliceosome, as part of the 18S U11/U12 snRNP complex, and thus may facilitate the interaction of these snRNP with the branch sites of U2 and U12 respectively. This is Splicing factor 3B subunit 6 from Drosophila melanogaster (Fruit fly).